The sequence spans 133 residues: Inhibitor of g-type lysozyme (133 aa).

A signal peptide spans 1 to 22; sequence MKIKSIRKAVLLLALLTSTSFA.

The protein resides in the periplasm. In terms of biological role, inhibits activity of g-type lysozyme, which confers increased lysozyme tolerance to the bacterium. The chain is Inhibitor of g-type lysozyme (pliG) from Escherichia coli (strain K12).